We begin with the raw amino-acid sequence, 200 residues long: Ribosome maturation factor RimM (200 aa).

The region spanning Lys103–Leu181 is the PRC barrel domain.

The protein belongs to the RimM family. As to quaternary structure, binds ribosomal protein uS19.

It localises to the cytoplasm. An accessory protein needed during the final step in the assembly of 30S ribosomal subunit, possibly for assembly of the head region. Essential for efficient processing of 16S rRNA. May be needed both before and after RbfA during the maturation of 16S rRNA. It has affinity for free ribosomal 30S subunits but not for 70S ribosomes. The chain is Ribosome maturation factor RimM from Kosmotoga olearia (strain ATCC BAA-1733 / DSM 21960 / TBF 19.5.1).